The chain runs to 73 residues: Capsid protein G8P (73 aa).

The first 23 residues, 1–23 (MKKSLVLKASVAVATLVPMLSFA), serve as a signal peptide directing secretion. Topologically, residues 24-47 (AEGDDPAKAAFNSLQASATEYIGY) are periplasmic. A helical transmembrane segment spans residues 48–68 (AWAMVVVIVGATIGIKLFKKF). Residues 69–73 (TSKAS) are Cytoplasmic-facing.

This sequence belongs to the inovirus capsid protein family. In terms of assembly, homomultimerizes. There are about 2,700 copies of this protein in the phage capsid.

The protein localises to the virion. It is found in the host cell inner membrane. Its function is as follows. Self assembles to form a helical capsid wrapping up the viral genomic DNA. The capsid displays a filamentous structure with a length of 760-1950 nm and a width of 6-8 nm. The virion assembly and budding take place at the host inner membrane. This chain is Capsid protein G8P (VIII), found in Enterobacteria phage M13 (Bacteriophage M13).